The primary structure comprises 143 residues: Cell division protein SepF (143 aa).

The protein belongs to the SepF family. Homodimer. Interacts with FtsZ.

It is found in the cytoplasm. Cell division protein that is part of the divisome complex and is recruited early to the Z-ring. Probably stimulates Z-ring formation, perhaps through the cross-linking of FtsZ protofilaments. Its function overlaps with FtsA. The polypeptide is Cell division protein SepF (Geobacillus thermodenitrificans (strain NG80-2)).